The chain runs to 172 residues: Transmembrane protein 91 (172 aa).

Residues 1-97 (MDNSSIQELQ…SPLLPHDHLG (97 aa)) are Extracellular-facing. Positions 60–86 (GLGEPETPDFEDTLSSDSDSDDDGGDR) are disordered. Over residues 65–83 (ETPDFEDTLSSDSDSDDDG) the composition is skewed to acidic residues. The chain crosses the membrane as a helical span at residues 98–118 (LAVFSVLCCFWPVGIAAFCLA). The Cytoplasmic portion of the chain corresponds to 119–139 (HKTNKAWAKGDVQGAGAASRR). The helical transmembrane segment at 140-160 (AFLLGVLAVGLGLCTYAAALV) threads the bilayer. The Extracellular segment spans residues 161–172 (TLAAYLASRDPP).

It belongs to the CD225/Dispanin family.

It localises to the membrane. The sequence is that of Transmembrane protein 91 (Tmem91) from Mus musculus (Mouse).